Reading from the N-terminus, the 382-residue chain is Deoxyhypusine synthase (382 aa).

NAD(+) contacts are provided by residues 108-112, 134-136, E140, and D257; these read SNLIS and TAG. 139 to 140 contacts spermidine; that stretch reads EE. D262 contributes to the spermidine binding site. G304 is a binding site for NAD(+). H309 contributes to the spermidine binding site. 329 to 330 is a binding site for NAD(+); the sequence is TG. Spermidine contacts are provided by residues 335 to 337 and 344 to 350; these read GSD and EAVSWGK. K350 acts as the Nucleophile in catalysis. 363–364 provides a ligand contact to NAD(+); it reads DV.

Belongs to the deoxyhypusine synthase family. NAD(+) is required as a cofactor.

The catalysed reaction is [eIF5A protein]-L-lysine + spermidine = [eIF5A protein]-deoxyhypusine + propane-1,3-diamine. It functions in the pathway protein modification; eIF5A hypusination. Catalyzes the NAD-dependent oxidative cleavage of spermidine and the subsequent transfer of the butylamine moiety of spermidine to the epsilon-amino group of a specific lysine residue of the eIF-5A precursor protein to form the intermediate deoxyhypusine residue. The sequence is that of Deoxyhypusine synthase (DYS1) from Eremothecium gossypii (strain ATCC 10895 / CBS 109.51 / FGSC 9923 / NRRL Y-1056) (Yeast).